A 395-amino-acid polypeptide reads, in one-letter code: MNQTWRAHLQSKLQQLHKQGQYRNLYVTEQAEETWLIRDKKRMLNLASNNYLGLAGDERLKEAAIACTKRYGTGATASRLVVGNHPLYEEVERSICDWKGTERALIVNSGYTANIGAISSLASRHDIVFSDKLNHASIVDGIILSGAEHKRYRHNDLDHLEKLLKMASPEKRKLIVTDTVFSMDGDTAYLRDLVQLKEKYGAIIIVDEAHASGIYGIGGAGLSHIEKNLSQKIDIHMGTFSKALGCYGAYLTGDEIYIEYLQNMMRSFIFTTALPPSTLGAVQKAIEIVKEDNERRENLIANGEYFRTKLRDAGFDIGNSSTHIVPIVVGSNEHALRFSKRLQEAGIAAIAIRPPTVPVHSSRIRFAVTSQHTIADLKWAIDRIIHIAKEEEIFV.

Residue R23 participates in substrate binding. 110–111 (GY) contacts pyridoxal 5'-phosphate. A substrate-binding site is contributed by H135. Pyridoxal 5'-phosphate-binding positions include S182, 207–210 (DEAH), and 239–242 (TFSK). K242 is subject to N6-(pyridoxal phosphate)lysine. T356 contacts substrate.

This sequence belongs to the class-II pyridoxal-phosphate-dependent aminotransferase family. BioF subfamily. As to quaternary structure, homodimer. The cofactor is pyridoxal 5'-phosphate.

It catalyses the reaction 6-carboxyhexanoyl-[ACP] + L-alanine + H(+) = (8S)-8-amino-7-oxononanoate + holo-[ACP] + CO2. The protein operates within cofactor biosynthesis; biotin biosynthesis. Its function is as follows. Catalyzes the decarboxylative condensation of pimeloyl-[acyl-carrier protein] and L-alanine to produce 8-amino-7-oxononanoate (AON), [acyl-carrier protein], and carbon dioxide. The polypeptide is Putative 8-amino-7-oxononanoate synthase (bioF) (Bacillus cereus (strain G9842)).